The chain runs to 327 residues: Phenylalanine--tRNA ligase alpha subunit (327 aa).

Glutamate 252 provides a ligand contact to Mg(2+).

This sequence belongs to the class-II aminoacyl-tRNA synthetase family. Phe-tRNA synthetase alpha subunit type 1 subfamily. Tetramer of two alpha and two beta subunits. Mg(2+) is required as a cofactor.

It is found in the cytoplasm. It carries out the reaction tRNA(Phe) + L-phenylalanine + ATP = L-phenylalanyl-tRNA(Phe) + AMP + diphosphate + H(+). The protein is Phenylalanine--tRNA ligase alpha subunit of Photorhabdus laumondii subsp. laumondii (strain DSM 15139 / CIP 105565 / TT01) (Photorhabdus luminescens subsp. laumondii).